A 334-amino-acid polypeptide reads, in one-letter code: Glycosylinositol phosphorylceramide mannosyl transferase 1 (334 aa).

The Cytoplasmic portion of the chain corresponds to 1–26 (MGGGEVSKEMGACSLAYRRGDQKLRK). The chain crosses the membrane as a helical; Signal-anchor for type II membrane protein span at residues 27–49 (FVTARSTKFLLFCCIAFVLVTIV). At 50 to 334 (CRSSRPWVNS…AVDSRNLWFW (285 aa)) the chain is on the lumenal side. N-linked (GlcNAc...) asparagine glycosylation occurs at Asn-58. Substrate contacts are provided by residues 145–150 (DSLNNR), 166–168 (DDD), Arg-196, and 258–262 (RNCED). Asp-168 serves as a coordination point for Mn(2+). The cysteines at positions 260 and 305 are disulfide-linked. Asp-262 is a catalytic residue. Asn-271 is a glycosylation site (N-linked (GlcNAc...) asparagine). Residues 289 to 302 (STGI…TEKR) and 292 to 302 (ISSIGGHTEKR) each bind substrate.

Belongs to the glycosyltransferase 64 family. Mn(2+) serves as cofactor. As to expression, expressed in leaves, roots, stem, and flowers.

The protein localises to the golgi apparatus membrane. Its pathway is protein modification; protein glycosylation. It participates in sphingolipid metabolism. Mannosyl transferase (ManT) required for the biosynthesis of mannose-carrying glycosylinositol phosphorylceramides (GIPCs). Maybe involved in cell-cell adhesion that maintains the integrity of organs by providing mechanical strength and facilitating the movement of metabolites throughout the plant during development. Prevents abscisic acid- (ABA-) mediated effects on development (e.g. cell size, flowering time, senescence). Probably implicated in beta-(1,4)-galactan biosynthesis thus being a cell-wall synthesis-related (CWSR) protein. The polypeptide is Glycosylinositol phosphorylceramide mannosyl transferase 1 (Arabidopsis thaliana (Mouse-ear cress)).